Reading from the N-terminus, the 140-residue chain is ATP synthase epsilon chain 1 (140 aa).

Belongs to the ATPase epsilon chain family. As to quaternary structure, F-type ATPases have 2 components, CF(1) - the catalytic core - and CF(0) - the membrane proton channel. CF(1) has five subunits: alpha(3), beta(3), gamma(1), delta(1), epsilon(1). CF(0) has three main subunits: a, b and c.

It is found in the cell inner membrane. In terms of biological role, produces ATP from ADP in the presence of a proton gradient across the membrane. The chain is ATP synthase epsilon chain 1 from Methylococcus capsulatus (strain ATCC 33009 / NCIMB 11132 / Bath).